Here is a 591-residue protein sequence, read N- to C-terminus: MCAASASPDNLVFHMKNEMRNIKYKPVDYQQLRALTEAKKLASASAKLKIRKAMLTSKLSKEQTLIKQHKQVWWQEYQRLNEVRCKMESEIKSLLNEENIGNECLCDLTNFEQELSEQQCTYLKNVINPIQQLRADLKYRQHHTLQHSHPHIEFNSMKVLEEVDFVKKQLKTVFERLRLEQQRIENDLSDWSIKILDHSLEEKTNPLSELPIELESLECPYPDLKSSILSEFYKFTQKYQKKLQDFNLQLEDIYRNCQLSEEDHWIYQAILDQYPGDLFGRRTLYLDMLQRYFPHKSRHDLVEHEKYCDQYRFAIEQQNILISNWNKNKKDFIQKAVLTLTEACATHEMESMLAKDKKKQQELCADLKAKVRQWRAHQEEVARLEMEISARRREKEEEKEKLWKKKELLQRAEKKKKIKKYWAKKKQKWQEMEMRDLQRLEELKKLIAEQSLKDRERVKYRQELLERRLMEKKEVALQEAHEDKERARRLEALRKQVAVVAQFDPVRMMSDTMASKARMGIEIEEEFILQKPLFTLNTYNEQQIISDPRLRFELALREAGLHRTLYAKEILPKISPQKPPRKDMESTVFKI.

3 coiled-coil regions span residues 166-195, 352-417, and 466-498; these read VKKQLKTVFERLRLEQQRIENDLSDWSIKI, MLAK…KKKK, and ERRLMEKKEVALQEAHEDKERARRLEALRKQVA.

This Homo sapiens (Human) protein is Coiled-coil domain-containing protein 148 (CCDC148).